A 711-amino-acid chain; its full sequence is Phosphate acetyltransferase (711 aa).

The segment at 390–711 is phosphate acetyltransferase; sequence AFRFQLTELA…IALTAIQATQ (322 aa).

It in the N-terminal section; belongs to the CobB/CobQ family. The protein in the C-terminal section; belongs to the phosphate acetyltransferase and butyryltransferase family. As to quaternary structure, homohexamer.

It localises to the cytoplasm. It catalyses the reaction acetyl-CoA + phosphate = acetyl phosphate + CoA. Its pathway is metabolic intermediate biosynthesis; acetyl-CoA biosynthesis; acetyl-CoA from acetate: step 2/2. Its function is as follows. Involved in acetate metabolism. The sequence is that of Phosphate acetyltransferase (pta) from Haemophilus influenzae (strain ATCC 51907 / DSM 11121 / KW20 / Rd).